A 349-amino-acid polypeptide reads, in one-letter code: DNA polymerase IV (349 aa).

The UmuC domain occupies 7 to 188 (IIHIDMDYFF…LPVKKLFGVG (182 aa)). Residues D11 and D106 each contribute to the Mg(2+) site. Residue E107 is part of the active site.

The protein belongs to the DNA polymerase type-Y family. Monomer. Mg(2+) serves as cofactor.

It localises to the cytoplasm. The catalysed reaction is DNA(n) + a 2'-deoxyribonucleoside 5'-triphosphate = DNA(n+1) + diphosphate. Poorly processive, error-prone DNA polymerase involved in untargeted mutagenesis. Copies undamaged DNA at stalled replication forks, which arise in vivo from mismatched or misaligned primer ends. These misaligned primers can be extended by PolIV. Exhibits no 3'-5' exonuclease (proofreading) activity. May be involved in translesional synthesis, in conjunction with the beta clamp from PolIII. This chain is DNA polymerase IV, found in Francisella tularensis subsp. holarctica (strain OSU18).